Here is a 920-residue protein sequence, read N- to C-terminus: MAHGEPYYSSKPDKDFNFGSTMARRQMTPTMVAKLPNFVRNSPQAYDWIVRGLIFPTTGKTYFQRVVVITGGLEDGTYGSFVFDGREWVEIYPIEHLNLMSSLKLIHKANALQERLRLSQEEKATLALDVQFLQHENVRLKELIPKPEPRKIQMKWIIVGAVLTFLSLIPGGYAQSQINNTIFTDMIAACKYSTETLTENLDLRIKLALANITISDKLDAVRQILNFAFVPRAHWLRTVFYYIHYYEMWNIFMFVLAIGTVMRSARPGTDLITLATSHLSGFRMAVLPTIPFHTTMTLWVMNTLMVCYYFDNLLAITLAILAPILGIIFLCFMEDSNYVSQIRGLIATAVLIAGGHACLTLTGTTTSLFVVILTCRFIRMATVFIGTRFEIRDANGKVVATVPTRIKNVAFDFFQKLKQSGVRVGVNEFVVIKPGALCVIDTPEGKGTGFFSGNDIVTAAHAVGNNTFVNVCYEGLMYEAKVRYMPEKDIAFITCPGDLHPTARLKLSKNPDYSCVTVMAYVNEDLVVSTAAAMVHGNTLSYAVRTQDGMSGAPVCDKYGRVLAVHQTNTGYTGGAVIIDPTDFHPVKAPSRVELLKEEIERLKAQLNSAAENPATAVTQQPVVTLEQKSVSDSDVVDLVRTAMEREMKVLRDEINGILAPFLQKKKGKTKHGRGRVRRNLRKGVKLLTEEEYRELLEKGLDRETFLDLIDRIIGERSGYPDYDDEDYYDEDDDGWGVVGDDVEFDYTEVINFDQAKPTPAPRTVKPKTCPEPEAETQPLDLSQKKEKQLEHEQQVVKSTKPQKNEPQPYSQTYGKAPIWESYDFDWDEDDAKFILPAPHRLTKADEIVLGSKIVKLRTIIETAIKTQNYSALPEAVFELDKAAYEAGLEGFLQRVKSKNKAPKNYKGPQKTKGPKTITH.

Transmembrane regions (helical) follow at residues 239–259 (VFYY…LAIG), 286–306 (VLPT…TLMV), 313–333 (LLAI…LCFM), and 344–364 (GLIA…LTGT). Residues histidine 461, aspartate 489, and serine 551 each act as charge relay system; for serine protease activity in the active site. Tyrosine 693 carries the post-translational modification O-(5'-phospho-RNA)-tyrosine. 2 disordered regions span residues 753–813 (FDQA…YSQT) and 900–920 (NKAP…TITH). The segment covering 783 to 795 (SQKKEKQLEHEQQ) has biased composition (basic and acidic residues). The segment covering 800 to 813 (TKPQKNEPQPYSQT) has biased composition (polar residues).

This sequence belongs to the astroviridae polyprotein 1A family. As to quaternary structure, monomer. Cleaved by the viral and host proteases. The protease is probably autocatalytically cleaved. In terms of processing, cleaved presumably by viral and host proteases.

Its subcellular location is the host membrane. It catalyses the reaction RNA(n) + a ribonucleoside 5'-triphosphate = RNA(n+1) + diphosphate. Functionally, responsible for the cleavage of the polyprotein into functional products. Covalently attached to the 5' extremity of the genomic and subgenomic RNAs. It may serve as a primer for the replicase. The sequence is that of Non-structural polyprotein 1A (ORF1) from Human astrovirus-4 (HAstV-4).